Here is a 253-residue protein sequence, read N- to C-terminus: 5'/3'-nucleotidase SurE (253 aa).

Residues Asp-8, Asp-9, Ser-39, and Asn-92 each contribute to the a divalent metal cation site.

This sequence belongs to the SurE nucleotidase family. The cofactor is a divalent metal cation.

It localises to the cytoplasm. It carries out the reaction a ribonucleoside 5'-phosphate + H2O = a ribonucleoside + phosphate. The enzyme catalyses a ribonucleoside 3'-phosphate + H2O = a ribonucleoside + phosphate. It catalyses the reaction [phosphate](n) + H2O = [phosphate](n-1) + phosphate + H(+). In terms of biological role, nucleotidase with a broad substrate specificity as it can dephosphorylate various ribo- and deoxyribonucleoside 5'-monophosphates and ribonucleoside 3'-monophosphates with highest affinity to 3'-AMP. Also hydrolyzes polyphosphate (exopolyphosphatase activity) with the preference for short-chain-length substrates (P20-25). Might be involved in the regulation of dNTP and NTP pools, and in the turnover of 3'-mononucleotides produced by numerous intracellular RNases (T1, T2, and F) during the degradation of various RNAs. The chain is 5'/3'-nucleotidase SurE from Shigella dysenteriae serotype 1 (strain Sd197).